Reading from the N-terminus, the 638-residue chain is Probable beta-glucosidase C (638 aa).

Residues 1–18 form the signal peptide; the sequence is MKVLAPGYLAEASLTALA. Residues N40, N94, N116, N223, and N274 are each glycosylated (N-linked (GlcNAc...) asparagine). Residue D341 is part of the active site. 4 N-linked (GlcNAc...) asparagine glycosylation sites follow: N364, N480, N488, and N528.

This sequence belongs to the glycosyl hydrolase 3 family.

Its subcellular location is the secreted. The enzyme catalyses Hydrolysis of terminal, non-reducing beta-D-glucosyl residues with release of beta-D-glucose.. It functions in the pathway glycan metabolism; cellulose degradation. Beta-glucosidases are one of a number of cellulolytic enzymes involved in the degradation of cellulosic biomass. Catalyzes the last step releasing glucose from the inhibitory cellobiose. The polypeptide is Probable beta-glucosidase C (bglC) (Aspergillus oryzae (strain ATCC 42149 / RIB 40) (Yellow koji mold)).